The primary structure comprises 248 residues: Probable proteasome subunit alpha type-3 (248 aa).

Belongs to the peptidase T1A family. The 26S proteasome consists of a 20S proteasome core and two 19S regulatory subunits. The 20S proteasome core is composed of 28 subunits that are arranged in four stacked rings, resulting in a barrel-shaped structure. The two end rings are each formed by seven alpha subunits, and the two central rings are each formed by seven beta subunits. The catalytic chamber with the active sites is on the inside of the barrel.

It localises to the cytoplasm. The protein resides in the nucleus. Its function is as follows. The proteasome is a multicatalytic proteinase complex which is characterized by its ability to cleave peptides with Arg, Phe, Tyr, Leu, and Glu adjacent to the leaving group at neutral or slightly basic pH. The proteasome has an ATP-dependent proteolytic activity. The polypeptide is Probable proteasome subunit alpha type-3 (Schizosaccharomyces pombe (strain 972 / ATCC 24843) (Fission yeast)).